A 345-amino-acid polypeptide reads, in one-letter code: Probable G-protein coupled receptor 139 (345 aa).

Residues Met-1 to Pro-21 are Extracellular-facing. Residue Asn-11 is glycosylated (N-linked (GlcNAc...) asparagine). A helical transmembrane segment spans residues Val-22 to Ile-42. At Leu-43–Tyr-57 the chain is on the cytoplasmic side. The helical transmembrane segment at Leu-58 to Leu-78 threads the bilayer. The Extracellular portion of the chain corresponds to Leu-79–Lys-94. Residues Ile-95–Thr-115 form a helical membrane-spanning segment. The Cytoplasmic portion of the chain corresponds to Val-116–Val-140. The chain crosses the membrane as a helical span at residues Ile-141–Ile-161. Residues Trp-162 to His-173 are Extracellular-facing. Residues Val-174–Leu-194 traverse the membrane as a helical segment. Residues Asn-195–Ala-220 are Cytoplasmic-facing. A helical transmembrane segment spans residues Ile-221–Leu-241. Residues Tyr-242–Asp-260 lie on the Extracellular side of the membrane. Residues Val-261–Ser-281 traverse the membrane as a helical segment. Over Lys-282 to Pro-345 the chain is Cytoplasmic.

The protein belongs to the G-protein coupled receptor 1 family. Expressed almost exclusively in the brain. Abundantly expressed in the ventrolateral region of caudate putamen, the habenular nucleus, the zona incerta, and the medial mammillary nucleus.

It is found in the cell membrane. Functionally, orphan receptor. Seems to act through a G(q/11)-mediated pathway. This Mus musculus (Mouse) protein is Probable G-protein coupled receptor 139 (Gpr139).